The primary structure comprises 152 residues: SsrA-binding protein (152 aa).

Residues 132–142 (REAIKKRDVSD) are compositionally biased toward basic and acidic residues. The disordered stretch occupies residues 132–152 (REAIKKRDVSDQIRSSLRRSR).

The protein belongs to the SmpB family.

The protein resides in the cytoplasm. Required for rescue of stalled ribosomes mediated by trans-translation. Binds to transfer-messenger RNA (tmRNA), required for stable association of tmRNA with ribosomes. tmRNA and SmpB together mimic tRNA shape, replacing the anticodon stem-loop with SmpB. tmRNA is encoded by the ssrA gene; the 2 termini fold to resemble tRNA(Ala) and it encodes a 'tag peptide', a short internal open reading frame. During trans-translation Ala-aminoacylated tmRNA acts like a tRNA, entering the A-site of stalled ribosomes, displacing the stalled mRNA. The ribosome then switches to translate the ORF on the tmRNA; the nascent peptide is terminated with the 'tag peptide' encoded by the tmRNA and targeted for degradation. The ribosome is freed to recommence translation, which seems to be the essential function of trans-translation. The chain is SsrA-binding protein from Bdellovibrio bacteriovorus (strain ATCC 15356 / DSM 50701 / NCIMB 9529 / HD100).